A 345-amino-acid polypeptide reads, in one-letter code: Phosphoribosylformylglycinamidine cyclo-ligase (345 aa).

The protein belongs to the AIR synthase family.

It is found in the cytoplasm. The enzyme catalyses 2-formamido-N(1)-(5-O-phospho-beta-D-ribosyl)acetamidine + ATP = 5-amino-1-(5-phospho-beta-D-ribosyl)imidazole + ADP + phosphate + H(+). The protein operates within purine metabolism; IMP biosynthesis via de novo pathway; 5-amino-1-(5-phospho-D-ribosyl)imidazole from N(2)-formyl-N(1)-(5-phospho-D-ribosyl)glycinamide: step 2/2. This is Phosphoribosylformylglycinamidine cyclo-ligase from Synechococcus sp. (strain CC9902).